An 806-amino-acid polypeptide reads, in one-letter code: Glycerol-3-phosphate acyltransferase (806 aa).

Residues 305 to 310 carry the HXXXXD motif motif; the sequence is CHRSHM.

The protein belongs to the GPAT/DAPAT family.

It is found in the cell inner membrane. It catalyses the reaction sn-glycerol 3-phosphate + an acyl-CoA = a 1-acyl-sn-glycero-3-phosphate + CoA. It functions in the pathway phospholipid metabolism; CDP-diacylglycerol biosynthesis; CDP-diacylglycerol from sn-glycerol 3-phosphate: step 1/3. This Enterobacter sp. (strain 638) protein is Glycerol-3-phosphate acyltransferase.